The following is a 299-amino-acid chain: Heat stress transcription factor B-2a (299 aa).

The DNA-binding element occupies 21 to 115 (PTPFLTKTFN…LLREIQRRKI (95 aa)). Residues 119 to 157 (HQTVVAPSSEQRNQTMVVSPSNSGEDNNNNQVMSSSPSS) form a disordered region. Residues 166–211 (TGNGGLSVELLEENEKLRSQNIQLNRELTQMKSICDNIYSLMSNYV) form a hydrophobic repeat HR-A/B region. The Nuclear localization signal motif lies at 261-264 (KRTR).

This sequence belongs to the HSF family. Class B subfamily. Homotrimer. Exhibits temperature-dependent phosphorylation.

The protein resides in the nucleus. Functionally, transcriptional regulator that specifically binds DNA sequence 5'-AGAAnnTTCT-3' known as heat shock promoter elements (HSE). In Arabidopsis thaliana (Mouse-ear cress), this protein is Heat stress transcription factor B-2a (HSFB2A).